Consider the following 155-residue polypeptide: Large ribosomal subunit protein uL22c (155 aa).

The protein belongs to the universal ribosomal protein uL22 family. In terms of assembly, part of the 50S ribosomal subunit.

It is found in the plastid. Its subcellular location is the chloroplast. Functionally, this protein binds specifically to 23S rRNA. In terms of biological role, the globular domain of the protein is located near the polypeptide exit tunnel on the outside of the subunit, while an extended beta-hairpin is found that lines the wall of the exit tunnel in the center of the 70S ribosome. The polypeptide is Large ribosomal subunit protein uL22c (rpl22) (Nicotiana tomentosiformis (Tobacco)).